Consider the following 103-residue polypeptide: Large ribosomal subunit protein bL21 (103 aa).

Belongs to the bacterial ribosomal protein bL21 family. Part of the 50S ribosomal subunit. Contacts protein L20.

Functionally, this protein binds to 23S rRNA in the presence of protein L20. The sequence is that of Large ribosomal subunit protein bL21 from Methylococcus capsulatus (strain ATCC 33009 / NCIMB 11132 / Bath).